The primary structure comprises 180 residues: Adipocyte-related X-chromosome expressed sequence 1 (180 aa).

Residues 1–11 (MNSLLSRANSL) lie on the Cytoplasmic side of the membrane. Residues 12 to 32 (FAFTLSVMAALTLGCILTTAF) traverse the membrane as a helical; Signal-anchor for type II membrane protein segment. Over 33–180 (KDRSAPVRLH…PDSYEIATTF (148 aa)) the chain is Lumenal. Asn-141 carries an N-linked (GlcNAc...) asparagine glycan.

This sequence belongs to the SPCS3 family. Strongly expressed in epididymal white and brown adipose tissue with low levels in heart.

It localises to the endoplasmic reticulum membrane. In terms of biological role, plays a role in adipogenesis. In Mus musculus (Mouse), this protein is Adipocyte-related X-chromosome expressed sequence 1.